A 501-amino-acid chain; its full sequence is MDSFNPALPSIVESLDDIYKNFENNKKRYEELNETFSKIYNGDKPIFYFRAPGRVNLIGEHVDYSGYCVLPFALEQDTIVAVSFNKLNNDIINIHNCNEKYTPKSIDVSGGGDIEIDMKRHHWTNYVLAAWKGVSQAMEKGGKLKSVNLLYSGNVPMGAGVSSSSALVCVSTLAISYCNNLILNKEELAQLSIKSERYVGVESGGMDQSISFLAEQNTAKLIEFHPSLKTFDVQLPKGVSFVICNSLVDSLKVVTGATNYNLRVVECRLAAVLLAFHCGLSWEKVRRLRDVQYQGNFDLPQLIQLTEQHLSEKQTYTREEVATILDISVEQLVKTYFPSGITVQSEHFELYKRARHVFTETQRVYKFSEICKQQSNFNNNNNNNNNNSSNNTNIIQELGKLMNESHESCSKLFECSCSELDSLTKICRENGALGSRLTGAGWGGCVISLVPNSKVDSFLDAIDTHYYSKFVNPEKLKNIEKSSYSFFTTPCKGACIVSSTV.

Alpha-D-galactose contacts are provided by R54, E60, H61, and D63. ATP contacts are provided by G158, G160, S162, and S163. D207 contacts alpha-D-galactose. D207 serves as the catalytic Proton acceptor. ATP is bound by residues S250 and K252. Alpha-D-galactose is bound at residue Y260.

This sequence belongs to the GHMP kinase family. GalK subfamily.

It carries out the reaction alpha-D-galactose + ATP = alpha-D-galactose 1-phosphate + ADP + H(+). It participates in carbohydrate metabolism; galactose metabolism. The sequence is that of Galactokinase (galK) from Dictyostelium discoideum (Social amoeba).